A 212-amino-acid polypeptide reads, in one-letter code: Phosphatidylserine decarboxylase proenzyme (212 aa).

Catalysis depends on S182, which acts as the Schiff-base intermediate with substrate; via pyruvic acid. S182 is modified (pyruvic acid (Ser); by autocatalysis).

This sequence belongs to the phosphatidylserine decarboxylase family. PSD-A subfamily. In terms of assembly, heterodimer of a large membrane-associated beta subunit and a small pyruvoyl-containing alpha subunit. It depends on pyruvate as a cofactor. Post-translationally, is synthesized initially as an inactive proenzyme. Formation of the active enzyme involves a self-maturation process in which the active site pyruvoyl group is generated from an internal serine residue via an autocatalytic post-translational modification. Two non-identical subunits are generated from the proenzyme in this reaction, and the pyruvate is formed at the N-terminus of the alpha chain, which is derived from the carboxyl end of the proenzyme. The post-translation cleavage follows an unusual pathway, termed non-hydrolytic serinolysis, in which the side chain hydroxyl group of the serine supplies its oxygen atom to form the C-terminus of the beta chain, while the remainder of the serine residue undergoes an oxidative deamination to produce ammonia and the pyruvoyl prosthetic group on the alpha chain.

Its subcellular location is the cell membrane. It catalyses the reaction a 1,2-diacyl-sn-glycero-3-phospho-L-serine + H(+) = a 1,2-diacyl-sn-glycero-3-phosphoethanolamine + CO2. It participates in phospholipid metabolism; phosphatidylethanolamine biosynthesis; phosphatidylethanolamine from CDP-diacylglycerol: step 2/2. Functionally, catalyzes the formation of phosphatidylethanolamine (PtdEtn) from phosphatidylserine (PtdSer). The chain is Phosphatidylserine decarboxylase proenzyme from Paraburkholderia phymatum (strain DSM 17167 / CIP 108236 / LMG 21445 / STM815) (Burkholderia phymatum).